We begin with the raw amino-acid sequence, 528 residues long: UDP-glucuronosyltransferase 2A2 (528 aa).

Residues 1–21 form the signal peptide; the sequence is MIKKVLQLLIFHLTLAEIVLS. Residues 22–494 are Extracellular-facing; sequence GNVVVWPTDG…FQYHSLDVIG (473 aa). N-linked (GlcNAc...) asparagine glycans are attached at residues Asn-48 and Asn-314. A helical transmembrane segment spans residues 495–515; it reads FLLACVASAILLVAKCCLFIF. Residues 516–528 are Cytoplasmic-facing; it reads QKVGKTGKKKKRD.

It belongs to the UDP-glycosyltransferase family.

It localises to the membrane. It catalyses the reaction glucuronate acceptor + UDP-alpha-D-glucuronate = acceptor beta-D-glucuronoside + UDP + H(+). The enzyme catalyses 17alpha-estradiol + UDP-alpha-D-glucuronate = 17alpha-estradiol 3-O-(beta-D-glucuronate) + UDP + H(+). It carries out the reaction 17beta-estradiol + UDP-alpha-D-glucuronate = 17beta-estradiol 3-O-(beta-D-glucuronate) + UDP + H(+). The catalysed reaction is chenodeoxycholate + UDP-alpha-D-glucuronate = chenodeoxycholoyl-24-O-(beta-D-glucuronate) + UDP. It catalyses the reaction lithocholate + UDP-alpha-D-glucuronate = lithocholoyl-24-O-(beta-D-glucuronate) + UDP. The enzyme catalyses deoxycholate + UDP-alpha-D-glucuronate = deoxycholoyl-24-O-(beta-D-glucuronate) + UDP. It carries out the reaction hyocholate + UDP-alpha-D-glucuronate = hyocholoyl-24-O-(beta-D-glucuronate) + UDP. The catalysed reaction is hyodeoxycholate + UDP-alpha-D-glucuronate = hyodeoxycholate 6-O-(beta-D-glucuronate) + UDP + H(+). In terms of biological role, UDP-glucuronosyltransferase (UGT) that catalyzes phase II biotransformation reactions in which lipophilic substrates are conjugated with glucuronic acid to increase the metabolite's water solubility, thereby facilitating excretion into either the urine or bile. Essential for the elimination and detoxification of drugs, xenobiotics and endogenous compounds. Catalyzes the glucuronidation of endogenous estrogen hormone estradiol. Contributes to bile acid (BA) detoxification by catalyzing the glucuronidation of BA substrates, which are natural detergents for dietary lipids absorption. Potential role in detoxification of toxic waste compounds in the amniotic fluid before birth, and air-born chemical after birth. The polypeptide is UDP-glucuronosyltransferase 2A2 (Mus musculus (Mouse)).